The primary structure comprises 360 residues: Peptide chain release factor 1 (360 aa).

An N5-methylglutamine modification is found at glutamine 235.

It belongs to the prokaryotic/mitochondrial release factor family. Methylated by PrmC. Methylation increases the termination efficiency of RF1.

The protein localises to the cytoplasm. In terms of biological role, peptide chain release factor 1 directs the termination of translation in response to the peptide chain termination codons UAG and UAA. This chain is Peptide chain release factor 1, found in Janthinobacterium sp. (strain Marseille) (Minibacterium massiliensis).